Reading from the N-terminus, the 437-residue chain is Regulator of phospholipase D SRF1 (437 aa).

The interval 1 to 24 (MGDSNSSQEAYSDTTSTNASRIAD) is disordered. Residues 1 to 267 (MGDSNSSQEA…LTSLLLDNQY (267 aa)) lie on the Cytoplasmic side of the membrane. Residues Ser45 and Ser167 each carry the phosphoserine modification. Residues 268 to 288 (LILGLRIFTGILSCISLALAI) traverse the membrane as a helical segment. The Extracellular portion of the chain corresponds to 289-308 (KIFQNSRSNNTISESKIGQQ). Residue Asn297 is glycosylated (N-linked (GlcNAc...) asparagine). A helical transmembrane segment spans residues 309–329 (PSTIMAICVNAVAIAYIIYIA). Residues 330–348 (HDEFAGKPVGLRNPLSKLK) are Cytoplasmic-facing. A helical transmembrane segment spans residues 349–369 (LILLDLLFIIFSSANLALAFN). Over 370–403 (TRFDKEWVCTSIRRSNGSTYGYPKIPRICRKQEA) the chain is Extracellular. Asn385 carries an N-linked (GlcNAc...) asparagine glycan. A helical membrane pass occupies residues 404–424 (LSAFLFVALFMWVITFSISIV). The Cytoplasmic portion of the chain corresponds to 425 to 437 (RVVEKVSSITNRN).

As to quaternary structure, interacts with SPO14.

The protein resides in the membrane. Regulator of phospholipase D (SPO14) which is required for SPO14 catalytic activity in mitotic cells. Essential to buffer the toxic effects of C16:0 platelet activating factor. This is Regulator of phospholipase D SRF1 (SRF1) from Saccharomyces cerevisiae (strain ATCC 204508 / S288c) (Baker's yeast).